The sequence spans 97 residues: Co-chaperonin GroES (97 aa).

The protein belongs to the GroES chaperonin family. In terms of assembly, heptamer of 7 subunits arranged in a ring. Interacts with the chaperonin GroEL.

Its subcellular location is the cytoplasm. Its function is as follows. Together with the chaperonin GroEL, plays an essential role in assisting protein folding. The GroEL-GroES system forms a nano-cage that allows encapsulation of the non-native substrate proteins and provides a physical environment optimized to promote and accelerate protein folding. GroES binds to the apical surface of the GroEL ring, thereby capping the opening of the GroEL channel. In Buchnera aphidicola subsp. Geoica urticularia, this protein is Co-chaperonin GroES.